Reading from the N-terminus, the 653-residue chain is tRNA 5-methylaminomethyl-2-thiouridine biosynthesis bifunctional protein MnmC (653 aa).

Residues 1 to 233 (MKTAPITPGR…KRDITVARFT (233 aa)) form a tRNA (mnm(5)s(2)U34)-methyltransferase region. The interval 258–653 (IGAGLAGCAA…YALPRWRSDS (396 aa)) is FAD-dependent cmnm(5)s(2)U34 oxidoreductase.

This sequence in the N-terminal section; belongs to the methyltransferase superfamily. tRNA (mnm(5)s(2)U34)-methyltransferase family. The protein in the C-terminal section; belongs to the DAO family. FAD serves as cofactor.

It is found in the cytoplasm. It carries out the reaction 5-aminomethyl-2-thiouridine(34) in tRNA + S-adenosyl-L-methionine = 5-methylaminomethyl-2-thiouridine(34) in tRNA + S-adenosyl-L-homocysteine + H(+). Catalyzes the last two steps in the biosynthesis of 5-methylaminomethyl-2-thiouridine (mnm(5)s(2)U) at the wobble position (U34) in tRNA. Catalyzes the FAD-dependent demodification of cmnm(5)s(2)U34 to nm(5)s(2)U34, followed by the transfer of a methyl group from S-adenosyl-L-methionine to nm(5)s(2)U34, to form mnm(5)s(2)U34. The chain is tRNA 5-methylaminomethyl-2-thiouridine biosynthesis bifunctional protein MnmC from Methylibium petroleiphilum (strain ATCC BAA-1232 / LMG 22953 / PM1).